Reading from the N-terminus, the 49-residue chain is Large ribosomal subunit protein bL33 (49 aa).

Belongs to the bacterial ribosomal protein bL33 family.

The protein is Large ribosomal subunit protein bL33 of Clostridium acetobutylicum (strain ATCC 824 / DSM 792 / JCM 1419 / IAM 19013 / LMG 5710 / NBRC 13948 / NRRL B-527 / VKM B-1787 / 2291 / W).